Here is a 1034-residue protein sequence, read N- to C-terminus: Glycine dehydrogenase (decarboxylating) B, mitochondrial (1034 aa).

A mitochondrion-targeting transit peptide spans 1–63 (MERARRLAIL…LNGFGSQVRT (63 aa)). Lys770 bears the N6-(pyridoxal phosphate)lysine mark.

Belongs to the GcvP family. In terms of assembly, homodimer. The glycine cleavage system is composed of four proteins: P, T, L and H. It depends on pyridoxal 5'-phosphate as a cofactor.

Its subcellular location is the mitochondrion. The catalysed reaction is N(6)-[(R)-lipoyl]-L-lysyl-[glycine-cleavage complex H protein] + glycine + H(+) = N(6)-[(R)-S(8)-aminomethyldihydrolipoyl]-L-lysyl-[glycine-cleavage complex H protein] + CO2. In terms of biological role, the glycine cleavage system catalyzes the degradation of glycine. The P protein binds the alpha-amino group of glycine through its pyridoxal phosphate cofactor; CO(2) is released and the remaining methylamine moiety is then transferred to the lipoamide cofactor of the H protein. The protein is Glycine dehydrogenase (decarboxylating) B, mitochondrial (GDCSPB) of Flaveria pringlei.